Reading from the N-terminus, the 315-residue chain is DDRGK domain-containing protein 1 (315 aa).

A helical membrane pass occupies residues Met1–Ala28. Residues Met1–Thr115 are mediates interaction with CDK5RAP3. Topologically, residues Ala29–Ala315 are cytoplasmic. The segment at Ala30–Arg184 is disordered. The span at Glu34–Ala43 shows a compositional bias: basic and acidic residues. A Phosphoserine modification is found at Ser73. The interval Gly119 to Leu217 is mediates interaction with TRIP4. The segment covering Lys125–Arg184 has biased composition (basic and acidic residues). The UFM1-interacting motif (UFIM) motif lies at Ala196–Glu210. Residues Leu217 to Ala315 are mediates interaction with UFL1. The region spanning Val230 to Pro274 is the PCI domain. Lys268 participates in a covalent cross-link: Glycyl lysine isopeptide (Lys-Gly) (interchain with G-Cter in UFM1).

It belongs to the DDRGK1 family. In terms of assembly, component of the UFM1 ribosome E3 ligase (UREL) complex, composed of UFL1, DDRGK1 and CDK5RAP3. Interacts with (unphosphorylated) ERN1/IRE1-alpha; interaction is dependent on UFM1 and takes place in response to endoplasmic reticulum stress, regulating ERN1/IRE1-alpha stability. Interacts with NFKBIA. Interacts with SOX9. Post-translationally, ufmylated; conjugated to ubiquitin-like protein UFM1, probably at Lys-268 by UFL1. The relevance of ufmylation is however unclear: as DDRGK1 acts as a substrate adapter for ufmylation, it is uncertain whether ufmylation is a collateral effect of the ufmylation process or whether it is required to regulate its activity. Ubiquitinated. Ubiquitination probably triggers proteasomal degradation and is negatively regulated by UFL1, the enzyme involved in the ufmylation of DDRGK1. In terms of tissue distribution, ubiquitously expressed. Higher expression in pancreatic islets, pancreatic acini and testis (at protein level). Highly expressed in the intestinal exocrine cells.

It is found in the endoplasmic reticulum membrane. In terms of biological role, component of the UFM1 ribosome E3 ligase (UREL) complex, a multiprotein complex that catalyzes ufmylation of endoplasmic reticulum-docked proteins. The UREL complex plays a key role in ribosome recycling by mediating mono-ufmylation of the RPL26/uL24 subunit of the 60S ribosome following ribosome dissociation: ufmylation weakens the junction between post-termination 60S subunits and SEC61 translocons, promoting release and recycling of the large ribosomal subunit from the endoplasmic reticulum membrane. Ufmylation of RPL26/uL24 and subsequent 60S ribosome recycling either take place after normal termination of translation or after ribosome stalling during cotranslational translocation at the endoplasmic reticulum. Within the UREL complex, DDRGK1 tethers the complex to the endoplasmic reticulum membrane to restrict its activity to endoplasmic reticulum-docked ribosomes and acts as an ufmylation 'reader': following RPL26/uL24 ufmylation, DDRGK1 specifically binds to ufmylated RPL26/uL24 via its UFIM motif, resulting in stable association between the 60S ribosome and the UREL complex, followed by dissociation of the 60S ribosome subunit from the endoplasmic reticulum membrane. The UREL complex is also involved in reticulophagy in response to endoplasmic reticulum stress by promoting ufmylation of proteins such as CYB5R3 and RPN1, thereby promoting lysosomal degradation of ufmylated proteins. Ufmylation-dependent reticulophagy inhibits the unfolded protein response (UPR) by regulating ERN1/IRE1-alpha stability. Acts as a regulator of immunity by promoting differentiation of B-cells into plasma cells: acts by promoting expansion of the endoplasmic reticulum and regulating the unfolded protein response (UPR). May also be required for TRIP4 ufmylation. May play a role in NF-kappa-B-mediated transcription through regulation of the phosphorylation and the degradation of NFKBIA, the inhibitor of NF-kappa-B. Plays a role in cartilage development through SOX9, inhibiting the ubiquitin-mediated proteasomal degradation of this transcriptional regulator. Required for stabilization and ufmylation of ATG9A. The protein is DDRGK domain-containing protein 1 of Mus musculus (Mouse).